A 314-amino-acid chain; its full sequence is MTKRKIVVALGGNAILSTDASANAQIKAVKETVKQLVAFVKQGDQLIISHGNGPQVGNLLIQQAASDSEKTPAMPLDTVGAMSQGEIGYWMQNAFNEVLAEEGLALDVATIVTQTIVDAKDEAFQNPTKPIGPFYSEAEAKKQQSINPEAHFVEDAGRGWRRVVPSPRPIGIQEAPVIQKLVEGNVITISAGGGGVPVAKEGNKLRGVEAVIDKDFASEKLAELVGADMLIILTAVDNVYVNFNKPDQKKLTNVSVAELEDYIKDDQFAKGSMLPKIQTAIEYVNNRPDSKAIITSLDNVKNLLAHDAGTIITK.

Belongs to the carbamate kinase family.

It localises to the cytoplasm. It carries out the reaction hydrogencarbonate + NH4(+) + ATP = carbamoyl phosphate + ADP + H2O + H(+). It functions in the pathway metabolic intermediate metabolism; carbamoyl phosphate degradation; CO(2) and NH(3) from carbamoyl phosphate: step 1/1. The chain is Carbamate kinase (arcC) from Latilactobacillus sakei (Lactobacillus sakei).